We begin with the raw amino-acid sequence, 163 residues long: 6,7-dimethyl-8-ribityllumazine synthase (163 aa).

Residues F27, 58-60, and 87-89 contribute to the 5-amino-6-(D-ribitylamino)uracil site; these read ALE and CVV. (2S)-2-hydroxy-3-oxobutyl phosphate is bound at residue 92–93; sequence DT. H95 serves as the catalytic Proton donor. N120 contributes to the 5-amino-6-(D-ribitylamino)uracil binding site. R134 serves as a coordination point for (2S)-2-hydroxy-3-oxobutyl phosphate.

Belongs to the DMRL synthase family.

It carries out the reaction (2S)-2-hydroxy-3-oxobutyl phosphate + 5-amino-6-(D-ribitylamino)uracil = 6,7-dimethyl-8-(1-D-ribityl)lumazine + phosphate + 2 H2O + H(+). Its pathway is cofactor biosynthesis; riboflavin biosynthesis; riboflavin from 2-hydroxy-3-oxobutyl phosphate and 5-amino-6-(D-ribitylamino)uracil: step 1/2. Functionally, catalyzes the formation of 6,7-dimethyl-8-ribityllumazine by condensation of 5-amino-6-(D-ribitylamino)uracil with 3,4-dihydroxy-2-butanone 4-phosphate. This is the penultimate step in the biosynthesis of riboflavin. This Rhodopseudomonas palustris (strain BisA53) protein is 6,7-dimethyl-8-ribityllumazine synthase.